The sequence spans 164 residues: UBA-like domain-containing protein 2 (164 aa).

At Ser2 the chain carries N-acetylserine. A disordered region spans residues 128-164 (SSPTTFHHLHRPQPTWPPGAQQGGAQQKAMAAMDGQR). The span at 146 to 164 (GAQQGGAQQKAMAAMDGQR) shows a compositional bias: low complexity.

The protein belongs to the UBALD family.

This Homo sapiens (Human) protein is UBA-like domain-containing protein 2 (UBALD2).